Consider the following 451-residue polypeptide: Probable gamma-glutamyl phosphate reductase (451 aa).

It belongs to the gamma-glutamyl phosphate reductase family.

It catalyses the reaction L-glutamate 5-semialdehyde + phosphate + NADP(+) = L-glutamyl 5-phosphate + NADPH + H(+). Its pathway is amino-acid biosynthesis; L-proline biosynthesis; L-glutamate 5-semialdehyde from L-glutamate: step 2/2. Functionally, catalyzes the NADPH dependent reduction of L-gamma-glutamyl 5-phosphate into L-glutamate 5-semialdehyde and phosphate. The product spontaneously undergoes cyclization to form 1-pyrroline-5-carboxylate. The protein is Probable gamma-glutamyl phosphate reductase (pro1) of Schizosaccharomyces pombe (strain 972 / ATCC 24843) (Fission yeast).